A 267-amino-acid polypeptide reads, in one-letter code: Transmembrane protein 106B (267 aa).

The Cytoplasmic portion of the chain corresponds to 1–92 (MGKALSHVAK…QRLRPRRTKL (92 aa)). A helical membrane pass occupies residues 93 to 113 (YVMASVILCLLLCTLAVFFLF). The Lumenal segment spans residues 114–267 (PRSIDVNYVG…EYSLNTPLTG (154 aa)). N-linked (GlcNAc...) asparagine glycans are attached at residues Asn-141, Asn-147, Asn-160, and Asn-179. A disulfide bridge links Cys-210 with Cys-249. N-linked (GlcNAc...) asparagine glycosylation occurs at Asn-252.

The protein belongs to the TMEM106 family.

Its subcellular location is the late endosome membrane. It is found in the lysosome membrane. It localises to the cell membrane. Functionally, in neurons, involved in the transport of late endosomes/lysosomes. May be involved in dendrite morphogenesis and maintenance by regulating lysosomal trafficking. May act as a molecular brake for retrograde transport of late endosomes/lysosomes, possibly via its interaction with MAP6. In motoneurons, may mediate the axonal transport of lysosomes and axonal sorting at the initial segment. It remains unclear whether TMEM106B affects the transport of moving lysosomes in the anterograde or retrograde direction in neurites and whether it is particularly important in the sorting of lysosomes in axons or in dendrites. In neurons, may also play a role in the regulation of lysosomal size and responsiveness to stress. Required for proper lysosomal acidification. The sequence is that of Transmembrane protein 106B (tmem106b) from Danio rerio (Zebrafish).